We begin with the raw amino-acid sequence, 412 residues long: Argininosuccinate synthase (412 aa).

Residues 12–20 (AYSGGLDTS) and alanine 39 each bind ATP. L-citrulline contacts are provided by tyrosine 91 and serine 96. Glycine 121 is an ATP binding site. Threonine 123, asparagine 127, and aspartate 128 together coordinate L-aspartate. L-citrulline is bound at residue asparagine 127. L-citrulline is bound by residues arginine 131, serine 180, serine 189, glutamate 265, and tyrosine 277.

It belongs to the argininosuccinate synthase family. Type 1 subfamily. In terms of assembly, homotetramer.

Its subcellular location is the cytoplasm. The catalysed reaction is L-citrulline + L-aspartate + ATP = 2-(N(omega)-L-arginino)succinate + AMP + diphosphate + H(+). Its pathway is amino-acid biosynthesis; L-arginine biosynthesis; L-arginine from L-ornithine and carbamoyl phosphate: step 2/3. This chain is Argininosuccinate synthase, found in Pseudoalteromonas atlantica (strain T6c / ATCC BAA-1087).